The chain runs to 176 residues: uncharacterized protein (176 aa).

Its subcellular location is the host cytoplasm. This is an uncharacterized protein from Escherichia phage Mu (Bacteriophage Mu).